A 258-amino-acid chain; its full sequence is Meiotic drive suppressor wtf20 (258 aa).

The tract at residues 1 to 71 is disordered; it reads MKNNYTSLKS…GPTEIANPNV (71 aa). Basic and acidic residues predominate over residues 19 to 30; the sequence is KTDHEIDLEKGL. Transmembrane regions (helical) follow at residues 84 to 106, 121 to 140, and 196 to 216; these read IYFL…TAWV, FSVT…FYFY, and SASA…AETV.

It belongs to the WTF family. Homomer. Interacts with other proteins that exhibit high sequence similarity.

The protein resides in the spore membrane. Its subcellular location is the vacuole membrane. In terms of biological role, acts as a suppressor component of the dual wtf meiotic drive system, and can suppress but not confer meiotic drive by compatible poisons. Wtf meiotic drive systems promote unequal transmission of alleles from the parental zygote to progeny spores by encoding a poison and an antidote from the same locus; the poison is trans-acting and forms toxic aggregates in all spores within an ascus, wherease the antidote is spore-specific and targets aggregates for degradation by the vacuole. Meiotic drive by wtf systems therefore lead to poisoning of all progeny that do not inherit the dual poison/antidote allele, or express a compatible antidote. This Schizosaccharomyces pombe (strain 972 / ATCC 24843) (Fission yeast) protein is Meiotic drive suppressor wtf20.